Reading from the N-terminus, the 404-residue chain is Glucose-1-phosphate adenylyltransferase (404 aa).

Residues Tyr99, Gly164, Glu179–Lys180, and Ser197 each bind alpha-D-glucose 1-phosphate.

This sequence belongs to the bacterial/plant glucose-1-phosphate adenylyltransferase family.

It catalyses the reaction alpha-D-glucose 1-phosphate + ATP + H(+) = ADP-alpha-D-glucose + diphosphate. It participates in capsule biogenesis; capsule polysaccharide biosynthesis. Its pathway is glycan biosynthesis; glycogen biosynthesis. Functionally, involved in the biosynthesis of ADP-glucose, a building block, required in the biosynthesis of maltose-1-phosphate (M1P) and in the elongation reactions to produce linear alpha-1,4-glucans. Catalyzes the reaction between ATP and alpha-D-glucose 1-phosphate (G1P) to produce pyrophosphate and ADP-Glc. The chain is Glucose-1-phosphate adenylyltransferase from Mycobacterium leprae (strain Br4923).